Here is a 461-residue protein sequence, read N- to C-terminus: Photosystem II CP43 reaction center protein (461 aa).

The propeptide occupies 1-2; that stretch reads ME. Thr-3 bears the N-acetylthreonine mark. Thr-3 is subject to Phosphothreonine. The next 5 helical transmembrane spans lie at 57 to 81, 122 to 143, 166 to 188, 243 to 263, and 279 to 300; these read LFEV…PHLA, LLGP…KDRN, KALY…RKIS, KPFA…LSYS, and WFNN…ASQA. Glu-355 contributes to the [CaMn4O5] cluster binding site. The chain crosses the membrane as a helical span at residues 435 to 459; sequence RARAAAAGFEKGIDRDFEPVLSMTP.

The protein belongs to the PsbB/PsbC family. PsbC subfamily. In terms of assembly, PSII is composed of 1 copy each of membrane proteins PsbA, PsbB, PsbC, PsbD, PsbE, PsbF, PsbH, PsbI, PsbJ, PsbK, PsbL, PsbM, PsbT, PsbX, PsbY, PsbZ, Psb30/Ycf12, at least 3 peripheral proteins of the oxygen-evolving complex and a large number of cofactors. It forms dimeric complexes. Binds multiple chlorophylls and provides some of the ligands for the Ca-4Mn-5O cluster of the oxygen-evolving complex. It may also provide a ligand for a Cl- that is required for oxygen evolution. PSII binds additional chlorophylls, carotenoids and specific lipids. serves as cofactor.

The protein resides in the plastid. It is found in the chloroplast thylakoid membrane. Its function is as follows. One of the components of the core complex of photosystem II (PSII). It binds chlorophyll and helps catalyze the primary light-induced photochemical processes of PSII. PSII is a light-driven water:plastoquinone oxidoreductase, using light energy to abstract electrons from H(2)O, generating O(2) and a proton gradient subsequently used for ATP formation. The polypeptide is Photosystem II CP43 reaction center protein (Trachelium caeruleum (Blue throatwort)).